The primary structure comprises 233 residues: MSLLYEGKAKRIFSTGTSDVLRVEYKDEVTAGNGAKKDFIEGKGRLNNQITSRIFNYLKAKGLNSHFIEQISETEQLVNSVEIIPLEVVVRNIAAGSITKRLGFEKGHTFETPLVEFFYKNDDLNDPLITEDHIKLLQIANDGEIEKLKEAATEINEVLVNLMDKMNLRLVDFKIEFGRTNEGEILLADEISPDTCRIWDKQSDTNFDKDVYREDTGSIIETYQTFLNKLEAL.

This sequence belongs to the SAICAR synthetase family.

It catalyses the reaction 5-amino-1-(5-phospho-D-ribosyl)imidazole-4-carboxylate + L-aspartate + ATP = (2S)-2-[5-amino-1-(5-phospho-beta-D-ribosyl)imidazole-4-carboxamido]succinate + ADP + phosphate + 2 H(+). Its pathway is purine metabolism; IMP biosynthesis via de novo pathway; 5-amino-1-(5-phospho-D-ribosyl)imidazole-4-carboxamide from 5-amino-1-(5-phospho-D-ribosyl)imidazole-4-carboxylate: step 1/2. This is Phosphoribosylaminoimidazole-succinocarboxamide synthase from Staphylococcus saprophyticus subsp. saprophyticus (strain ATCC 15305 / DSM 20229 / NCIMB 8711 / NCTC 7292 / S-41).